Here is a 477-residue protein sequence, read N- to C-terminus: 3-isopropylmalate dehydratase large subunit (477 aa).

[4Fe-4S] cluster is bound by residues C352, C413, and C416.

Belongs to the aconitase/IPM isomerase family. LeuC type 1 subfamily. In terms of assembly, heterodimer of LeuC and LeuD. It depends on [4Fe-4S] cluster as a cofactor.

The enzyme catalyses (2R,3S)-3-isopropylmalate = (2S)-2-isopropylmalate. It participates in amino-acid biosynthesis; L-leucine biosynthesis; L-leucine from 3-methyl-2-oxobutanoate: step 2/4. Catalyzes the isomerization between 2-isopropylmalate and 3-isopropylmalate, via the formation of 2-isopropylmaleate. This Pseudomonas putida (strain ATCC 47054 / DSM 6125 / CFBP 8728 / NCIMB 11950 / KT2440) protein is 3-isopropylmalate dehydratase large subunit.